Here is a 236-residue protein sequence, read N- to C-terminus: Transcriptional activator protein SolR (236 aa).

The HTH luxR-type domain maps to 169–234; sequence VPESNAVLTT…QAVVKAIATG (66 aa). The segment at residues 193-212 is a DNA-binding region (H-T-H motif); that stretch reads AYEIGQILRISERTVNFHVN.

The protein belongs to the autoinducer-regulated transcriptional regulatory protein family.

The chain is Transcriptional activator protein SolR (solR) from Ralstonia solanacearum (Pseudomonas solanacearum).